The chain runs to 872 residues: Alanine--tRNA ligase (872 aa).

Zn(2+) is bound by residues His561, His565, Cys662, and His666.

It belongs to the class-II aminoacyl-tRNA synthetase family. Requires Zn(2+) as cofactor.

Its subcellular location is the cytoplasm. The catalysed reaction is tRNA(Ala) + L-alanine + ATP = L-alanyl-tRNA(Ala) + AMP + diphosphate. In terms of biological role, catalyzes the attachment of alanine to tRNA(Ala) in a two-step reaction: alanine is first activated by ATP to form Ala-AMP and then transferred to the acceptor end of tRNA(Ala). Also edits incorrectly charged Ser-tRNA(Ala) and Gly-tRNA(Ala) via its editing domain. This is Alanine--tRNA ligase from Thiobacillus denitrificans (strain ATCC 25259 / T1).